The chain runs to 105 residues: Small ribosomal subunit protein uS10 (105 aa).

Belongs to the universal ribosomal protein uS10 family. As to quaternary structure, part of the 30S ribosomal subunit.

Its function is as follows. Involved in the binding of tRNA to the ribosomes. In Chlamydia pneumoniae (Chlamydophila pneumoniae), this protein is Small ribosomal subunit protein uS10.